Here is a 465-residue protein sequence, read N- to C-terminus: UDP-N-acetylmuramate--L-alanine ligase (465 aa).

ATP is bound at residue 112–118; the sequence is GTHGKTT.

Belongs to the MurCDEF family.

The protein resides in the cytoplasm. The catalysed reaction is UDP-N-acetyl-alpha-D-muramate + L-alanine + ATP = UDP-N-acetyl-alpha-D-muramoyl-L-alanine + ADP + phosphate + H(+). It functions in the pathway cell wall biogenesis; peptidoglycan biosynthesis. Functionally, cell wall formation. In Janthinobacterium sp. (strain Marseille) (Minibacterium massiliensis), this protein is UDP-N-acetylmuramate--L-alanine ligase.